The chain runs to 183 residues: Large ribosomal subunit protein uL6 (183 aa).

This sequence belongs to the universal ribosomal protein uL6 family. As to quaternary structure, part of the 50S ribosomal subunit.

In terms of biological role, this protein binds to the 23S rRNA, and is important in its secondary structure. It is located near the subunit interface in the base of the L7/L12 stalk, and near the tRNA binding site of the peptidyltransferase center. The polypeptide is Large ribosomal subunit protein uL6 (Moorella thermoacetica (strain ATCC 39073 / JCM 9320)).